The chain runs to 320 residues: Apolipoprotein E (320 aa).

The signal sequence occupies residues Met-1–Gly-18. 8 repeat units span residues Ala-82–Ser-103, Pro-104–Gly-125, Ala-126–Gly-147, Gln-148–Leu-169, Arg-170–Glu-191, Arg-192–Ala-213, Thr-214–Arg-236, and Ala-237–Glu-258. Positions Ala-82–Glu-258 are 8 X 22 AA approximate tandem repeats. Met-145 bears the Methionine sulfoxide mark. A Phosphoserine modification is found at Ser-149. The LDL and other lipoprotein receptors binding stretch occupies residues His-160–Arg-170. Leu-164–Arg-167 is a heparin binding site. Residues Ala-212–Met-293 form a lipid-binding and lipoprotein association region. Gly-232–Met-239 is a heparin binding site. The homooligomerization stretch occupies residues Gln-269 to His-320. The specificity for association with VLDL stretch occupies residues Arg-281–Met-293.

This sequence belongs to the apolipoprotein A1/A4/E family. Homotetramer. May interact with ABCA1; functionally associated with ABCA1 in the biogenesis of HDLs. May interact with APP/A4 amyloid-beta peptide; the interaction is extremely stable in vitro but its physiological significance is unclear. May interact with MAPT. May interact with MAP2. In the cerebrospinal fluid, interacts with secreted SORL1. Interacts with PMEL; this allows the loading of PMEL luminal fragment on ILVs to induce fibril nucleation. APOE exists as multiple glycosylated and sialylated glycoforms within cells and in plasma. The extent of glycosylation and sialylation are tissue and context specific. Post-translationally, glycated in plasma VLDL. In terms of processing, phosphorylated by FAM20C in the extracellular medium.

It is found in the secreted. The protein localises to the extracellular space. It localises to the extracellular matrix. Its subcellular location is the extracellular vesicle. The protein resides in the endosome. It is found in the multivesicular body. Its function is as follows. APOE is an apolipoprotein, a protein associating with lipid particles, that mainly functions in lipoprotein-mediated lipid transport between organs via the plasma and interstitial fluids. APOE is a core component of plasma lipoproteins and is involved in their production, conversion and clearance. Apolipoproteins are amphipathic molecules that interact both with lipids of the lipoprotein particle core and the aqueous environment of the plasma. As such, APOE associates with chylomicrons, chylomicron remnants, very low density lipoproteins (VLDL) and intermediate density lipoproteins (IDL) but shows a preferential binding to high-density lipoproteins (HDL). It also binds a wide range of cellular receptors including the LDL receptor/LDLR, the LDL receptor-related proteins LRP1, LRP2 and LRP8 and the very low-density lipoprotein receptor/VLDLR that mediate the cellular uptake of the APOE-containing lipoprotein particles. Finally, APOE also has a heparin-binding activity and binds heparan-sulfate proteoglycans on the surface of cells, a property that supports the capture and the receptor-mediated uptake of APOE-containing lipoproteins by cells. A main function of APOE is to mediate lipoprotein clearance through the uptake of chylomicrons, VLDLs, and HDLs by hepatocytes. APOE is also involved in the biosynthesis by the liver of VLDLs as well as their uptake by peripheral tissues ensuring the delivery of triglycerides and energy storage in muscle, heart and adipose tissues. By participating in the lipoprotein-mediated distribution of lipids among tissues, APOE plays a critical role in plasma and tissues lipid homeostasis. APOE is also involved in two steps of reverse cholesterol transport, the HDLs-mediated transport of cholesterol from peripheral tissues to the liver, and thereby plays an important role in cholesterol homeostasis. First, it is functionally associated with ABCA1 in the biogenesis of HDLs in tissues. Second, it is enriched in circulating HDLs and mediates their uptake by hepatocytes. APOE also plays an important role in lipid transport in the central nervous system, regulating neuron survival and sprouting. In Plecturocebus moloch (Dusky titi monkey), this protein is Apolipoprotein E (APOE).